We begin with the raw amino-acid sequence, 475 residues long: ATP synthase subunit beta (475 aa).

152 to 159 (GGAGVGKT) lines the ATP pocket.

The protein belongs to the ATPase alpha/beta chains family. In terms of assembly, F-type ATPases have 2 components, CF(1) - the catalytic core - and CF(0) - the membrane proton channel. CF(1) has five subunits: alpha(3), beta(3), gamma(1), delta(1), epsilon(1). CF(0) has four main subunits: a(1), b(1), b'(1) and c(9-12).

It is found in the cell inner membrane. The catalysed reaction is ATP + H2O + 4 H(+)(in) = ADP + phosphate + 5 H(+)(out). In terms of biological role, produces ATP from ADP in the presence of a proton gradient across the membrane. The catalytic sites are hosted primarily by the beta subunits. The chain is ATP synthase subunit beta from Cereibacter sphaeroides (strain ATCC 17025 / ATH 2.4.3) (Rhodobacter sphaeroides).